Reading from the N-terminus, the 354-residue chain is UDP-3-O-acylglucosamine N-acyltransferase (354 aa).

The active-site Proton acceptor is the histidine 257. Positions 335-354 (AQQVSKSKLRGRNPGGKQND) are disordered.

Belongs to the transferase hexapeptide repeat family. LpxD subfamily. In terms of assembly, homotrimer.

The catalysed reaction is a UDP-3-O-[(3R)-3-hydroxyacyl]-alpha-D-glucosamine + a (3R)-hydroxyacyl-[ACP] = a UDP-2-N,3-O-bis[(3R)-3-hydroxyacyl]-alpha-D-glucosamine + holo-[ACP] + H(+). It participates in bacterial outer membrane biogenesis; LPS lipid A biosynthesis. In terms of biological role, catalyzes the N-acylation of UDP-3-O-acylglucosamine using 3-hydroxyacyl-ACP as the acyl donor. Is involved in the biosynthesis of lipid A, a phosphorylated glycolipid that anchors the lipopolysaccharide to the outer membrane of the cell. The protein is UDP-3-O-acylglucosamine N-acyltransferase of Rhizobium etli (strain ATCC 51251 / DSM 11541 / JCM 21823 / NBRC 15573 / CFN 42).